We begin with the raw amino-acid sequence, 238 residues long: Ribitol-5-phosphate cytidylyltransferase 2 (238 aa).

Residues Leu7–Gly10 and Gly81–Thr87 each bind CTP.

This sequence belongs to the IspD/TarI cytidylyltransferase family. TarI subfamily.

The enzyme catalyses D-ribitol 5-phosphate + CTP + H(+) = CDP-L-ribitol + diphosphate. It functions in the pathway cell wall biogenesis; poly(ribitol phosphate) teichoic acid biosynthesis. Its function is as follows. Catalyzes the transfer of the cytidylyl group of CTP to D-ribitol 5-phosphate. The chain is Ribitol-5-phosphate cytidylyltransferase 2 from Staphylococcus aureus (strain MRSA252).